A 172-amino-acid chain; its full sequence is Putative phosphoesterase BT9727_1129 (172 aa).

The active-site Proton donor is the histidine 34. 2 consecutive short sequence motifs (HXTX) follow at residues 34 to 37 and 115 to 118; these read HITL and HLTI. The Proton acceptor role is filled by histidine 115.

The protein belongs to the 2H phosphoesterase superfamily. YjcG family.

The chain is Putative phosphoesterase BT9727_1129 from Bacillus thuringiensis subsp. konkukian (strain 97-27).